Here is a 216-residue protein sequence, read N- to C-terminus: 3-keto-L-gulonate-6-phosphate decarboxylase UlaD (216 aa).

Asp-11 contacts substrate. Positions 33 and 62 each coordinate Mg(2+). Arg-192 is a binding site for substrate.

The protein belongs to the HPS/KGPDC family. KGPDC subfamily. In terms of assembly, homodimer. Mg(2+) is required as a cofactor.

The enzyme catalyses 3-dehydro-L-gulonate 6-phosphate + H(+) = L-xylulose 5-phosphate + CO2. It participates in cofactor degradation; L-ascorbate degradation; D-xylulose 5-phosphate from L-ascorbate: step 2/4. Catalyzes the decarboxylation of 3-keto-L-gulonate-6-P into L-xylulose-5-P. Is involved in the anaerobic L-ascorbate utilization. The sequence is that of 3-keto-L-gulonate-6-phosphate decarboxylase UlaD from Escherichia coli O17:K52:H18 (strain UMN026 / ExPEC).